Reading from the N-terminus, the 130-residue chain is Osteocrin (130 aa).

Residues 1–25 (MLDWRLASTHFILAMIVMLWGSGKA) form the signal peptide. Arginine 129 carries the post-translational modification Arginine amide.

It belongs to the Osteocrin family. As to quaternary structure, interacts with NPR3. As to expression, expressed in skeletal muscle and to a much lesser extent in bone, brown adipose tissue, spleen and testis. Not expressed in neurons.

It localises to the secreted. In terms of biological role, hormone that acts as a ligand for natriuretic peptide receptor NPR3/NPR-C and promotes bone growth and physical endurance in muscle. Acts as a regulator of osteoblast differentiation and bone growth by binding to natriuretic peptide receptor NPR3/NPR-C, thereby preventing binding between NPR3/NPR-C and natriuretic peptides, leading to increase cGMP production. Required to enhance physical endurance: induced following physical exercise in muscle and promotes cGMP production, probably by interacting with NPR3/NPR-C. May act as an autocrine and paracrine factor linked to glucose metabolism in skeletal muscle. The polypeptide is Osteocrin (Mus musculus (Mouse)).